Here is a 107-residue protein sequence, read N- to C-terminus: Replication initiation control protein YabA (107 aa).

The Zn(2+) site is built by H81, C83, C97, and C100.

The protein belongs to the YabA family. Homotetramer. Interacts with both DnaA and DnaN, acting as a bridge between these two proteins. It depends on Zn(2+) as a cofactor.

It is found in the cytoplasm. Its subcellular location is the nucleoid. In terms of biological role, involved in control of chromosome replication initiation. Inhibits the cooperative binding of DnaA to the oriC region, thus negatively regulating initiation of chromosome replication. Inhibits the ability of DnaA-ATP to form a helix on DNA; does not disassemble preformed DnaA-DNA helices. Decreases the residence time of DnaA on the chromosome at its binding sites (oriC, replication forks and promoter-binding sites). Tethers DnaA to the replication machinery via the DNA polymerase beta sliding clamp subunit (dnaN). Associates with oriC and other DnaA targets on the chromosome in a DnaA-dependent manner. This Streptococcus pyogenes serotype M3 (strain ATCC BAA-595 / MGAS315) protein is Replication initiation control protein YabA.